A 102-amino-acid polypeptide reads, in one-letter code: MICOS complex subunit MIC12 (102 aa).

The helical transmembrane segment at 4–26 threads the bilayer; the sequence is VLKLTSVTLAASSLAAAGYFYAF.

This sequence belongs to the MICOS complex subunit Mic12 family. Component of the mitochondrial contact site and cristae organizing system (MICOS) complex.

The protein resides in the mitochondrion inner membrane. Component of the MICOS complex, a large protein complex of the mitochondrial inner membrane that plays crucial roles in the maintenance of crista junctions, inner membrane architecture, and formation of contact sites to the outer membrane. This is MICOS complex subunit MIC12 (AIM5) from Lachancea thermotolerans (strain ATCC 56472 / CBS 6340 / NRRL Y-8284) (Yeast).